Reading from the N-terminus, the 247-residue chain is Carboxy-S-adenosyl-L-methionine synthase (247 aa).

S-adenosyl-L-methionine-binding positions include Tyr-40, 65-67 (GCS), 90-91 (DN), 122-123 (DI), Asn-137, and Arg-204.

Belongs to the class I-like SAM-binding methyltransferase superfamily. Cx-SAM synthase family. In terms of assembly, homodimer.

The enzyme catalyses prephenate + S-adenosyl-L-methionine = carboxy-S-adenosyl-L-methionine + 3-phenylpyruvate + H2O. Its function is as follows. Catalyzes the conversion of S-adenosyl-L-methionine (SAM) to carboxy-S-adenosyl-L-methionine (Cx-SAM). The protein is Carboxy-S-adenosyl-L-methionine synthase of Pseudomonas syringae pv. tomato (strain ATCC BAA-871 / DC3000).